A 315-amino-acid chain; its full sequence is Methionyl-tRNA formyltransferase (315 aa).

113–116 is a (6S)-5,6,7,8-tetrahydrofolate binding site; that stretch reads SLLP.

The protein belongs to the Fmt family.

The enzyme catalyses L-methionyl-tRNA(fMet) + (6R)-10-formyltetrahydrofolate = N-formyl-L-methionyl-tRNA(fMet) + (6S)-5,6,7,8-tetrahydrofolate + H(+). In terms of biological role, attaches a formyl group to the free amino group of methionyl-tRNA(fMet). The formyl group appears to play a dual role in the initiator identity of N-formylmethionyl-tRNA by promoting its recognition by IF2 and preventing the misappropriation of this tRNA by the elongation apparatus. This chain is Methionyl-tRNA formyltransferase, found in Shigella sonnei (strain Ss046).